A 208-amino-acid polypeptide reads, in one-letter code: Small ribosomal subunit protein uS4 (208 aa).

Residues 97–158 enclose the S4 RNA-binding domain; the sequence is TRLDNVIYRM…RAQKYLCVQE (62 aa).

This sequence belongs to the universal ribosomal protein uS4 family. In terms of assembly, part of the 30S ribosomal subunit. Contacts protein S5. The interaction surface between S4 and S5 is involved in control of translational fidelity.

One of the primary rRNA binding proteins, it binds directly to 16S rRNA where it nucleates assembly of the body of the 30S subunit. Functionally, with S5 and S12 plays an important role in translational accuracy. This Xylella fastidiosa (strain M23) protein is Small ribosomal subunit protein uS4.